Reading from the N-terminus, the 125-residue chain is Large ribosomal subunit protein bL19 (125 aa).

It belongs to the bacterial ribosomal protein bL19 family.

In terms of biological role, this protein is located at the 30S-50S ribosomal subunit interface and may play a role in the structure and function of the aminoacyl-tRNA binding site. This Ehrlichia chaffeensis (strain ATCC CRL-10679 / Arkansas) protein is Large ribosomal subunit protein bL19.